The chain runs to 187 residues: Ribosome-recycling factor (187 aa).

Belongs to the RRF family.

The protein localises to the cytoplasm. Responsible for the release of ribosomes from messenger RNA at the termination of protein biosynthesis. May increase the efficiency of translation by recycling ribosomes from one round of translation to another. The polypeptide is Ribosome-recycling factor (Paracoccus zeaxanthinifaciens).